The following is a 310-amino-acid chain: Olfactory receptor 5P55 (310 aa).

At 1–25 (METQNHTTVTEFILLGLTESSTLRV) the chain is on the extracellular side. Asparagine 5 carries N-linked (GlcNAc...) asparagine glycosylation. A helical transmembrane segment spans residues 26–46 (ILFMVFLGIYTVTLVGNFSII). At 47-54 (SLIRSCPQ) the chain is on the cytoplasmic side. Residues 55–75 (LHTPMYLFLSHLAFVDIGFST) form a helical membrane-spanning segment. The Extracellular segment spans residues 76–99 (SITPTMFKGFLGNRLVLSVAACIA). A disulfide bond links cysteine 97 and cysteine 189. A helical transmembrane segment spans residues 100 to 120 (QFCITVTFGTVECFLLAVMAY). The Cytoplasmic segment spans residues 121 to 133 (DRYVAICSPLLYS). Residues 134–154 (THMSPRICFLLVGASYVGGCV) form a helical membrane-spanning segment. Over 155 to 196 (NSGAFTSCLSILSFCGPNQIDHFFCDFPAVLKLSCSDVSIIG) the chain is Extracellular. A helical membrane pass occupies residues 197–217 (IIPSISAGSIIVITVFVIAVS). The Cytoplasmic segment spans residues 218-237 (YAYILITILKMRSTEGRQKA). Residues 238 to 258 (FSTCTSHLTAVTLYYGTITFI) traverse the membrane as a helical segment. The Extracellular portion of the chain corresponds to 259-271 (YVMPKSNYSTAQN). N-linked (GlcNAc...) asparagine glycosylation is present at asparagine 265. A helical transmembrane segment spans residues 272–292 (KILSVFYTVVIPMLNPLIYSL). The Cytoplasmic portion of the chain corresponds to 293–310 (RNRDVKEALRKAIIRIFP).

Belongs to the G-protein coupled receptor 1 family.

The protein resides in the cell membrane. Its function is as follows. Potential odorant receptor. This is Olfactory receptor 5P55 from Mus musculus (Mouse).